A 134-amino-acid chain; its full sequence is Waprin-Phi1 (134 aa).

Positions 1-23 (MTLRRGSCPLLLFSLVGLLTTCA) are cleaved as a signal peptide. WAP domains are found at residues 36-82 (VAEK…SCQI) and 83-133 (PDEK…TTAR). 8 disulfide bridges follow: cysteine 43-cysteine 72, cysteine 55-cysteine 76, cysteine 59-cysteine 71, cysteine 65-cysteine 80, cysteine 90-cysteine 120, cysteine 103-cysteine 124, cysteine 107-cysteine 119, and cysteine 113-cysteine 129.

Belongs to the venom waprin family. Expressed by the venom gland.

It localises to the secreted. In terms of biological role, damages membranes of susceptible bacteria. Has no hemolytic activity. Not toxic to mice. Does not inhibit the proteinases elastase and cathepsin G. This Philodryas olfersii (Green snake) protein is Waprin-Phi1.